Consider the following 264-residue polypeptide: Thymidylate synthase (264 aa).

R21 provides a ligand contact to dUMP. (6R)-5,10-methylene-5,6,7,8-tetrahydrofolate is bound at residue H51. Residue 126–127 coordinates dUMP; that stretch reads RR. The active-site Nucleophile is the C146. Residues 166 to 169, N177, and 207 to 209 contribute to the dUMP site; these read RSAD and HLY. D169 serves as a coordination point for (6R)-5,10-methylene-5,6,7,8-tetrahydrofolate. A263 serves as a coordination point for (6R)-5,10-methylene-5,6,7,8-tetrahydrofolate.

The protein belongs to the thymidylate synthase family. Bacterial-type ThyA subfamily. In terms of assembly, homodimer.

It is found in the cytoplasm. It catalyses the reaction dUMP + (6R)-5,10-methylene-5,6,7,8-tetrahydrofolate = 7,8-dihydrofolate + dTMP. It participates in pyrimidine metabolism; dTTP biosynthesis. Its function is as follows. Catalyzes the reductive methylation of 2'-deoxyuridine-5'-monophosphate (dUMP) to 2'-deoxythymidine-5'-monophosphate (dTMP) while utilizing 5,10-methylenetetrahydrofolate (mTHF) as the methyl donor and reductant in the reaction, yielding dihydrofolate (DHF) as a by-product. This enzymatic reaction provides an intracellular de novo source of dTMP, an essential precursor for DNA biosynthesis. In Alkalilimnicola ehrlichii (strain ATCC BAA-1101 / DSM 17681 / MLHE-1), this protein is Thymidylate synthase.